Reading from the N-terminus, the 387-residue chain is MAVTKITDLNLKNKRVLIRADLNVPIKDGQITSYARINASLPTIITVLKQGAASVMVTSHLGRPTEGQYDENLSLYRVVNYLQQKISIPVRLIKDYLNGISFTEKQLLVLENVRFNKGETKNDETLAKQYAALCDIFIMDAFGTAHRAHASTYGIAKYAPLVCAGLLLYNELEVLSKALNQPVRPMVAIVGGSKVSTKLMLLNKLSKISDHLIVGGGIANTFLAAQGYNVGQSLLEPNLINKAKQLLKYKNILLPTDVRVSQELDNAATLKHIREVGNNEKIFDIGDESANRFAKILQQAKTILWNGPVGAFELTHFRQGTKILANAIVSSNAFSIAGGGDTLAAIDYFNLNDKISYLSTGGGAFLSFIEGKTLPAVAMLIERNKNN.

Substrate is bound by residues 21–23, Arg36, 60–63, Arg114, and Arg147; these read DLN and HLGR. Residues Lys198, Glu313, and 339 to 342 each bind ATP; that span reads GGDT.

Belongs to the phosphoglycerate kinase family. In terms of assembly, monomer.

Its subcellular location is the cytoplasm. The enzyme catalyses (2R)-3-phosphoglycerate + ATP = (2R)-3-phospho-glyceroyl phosphate + ADP. The protein operates within carbohydrate degradation; glycolysis; pyruvate from D-glyceraldehyde 3-phosphate: step 2/5. This Baumannia cicadellinicola subsp. Homalodisca coagulata protein is Phosphoglycerate kinase.